Here is a 181-residue protein sequence, read N- to C-terminus: Probable RNA 2'-phosphotransferase (181 aa).

This sequence belongs to the KptA/TPT1 family.

In terms of biological role, removes the 2'-phosphate from RNA via an intermediate in which the phosphate is ADP-ribosylated by NAD followed by a presumed transesterification to release the RNA and generate ADP-ribose 1''-2''-cyclic phosphate (APPR&gt;P). May function as an ADP-ribosylase. This Acaryochloris marina (strain MBIC 11017) protein is Probable RNA 2'-phosphotransferase.